A 249-amino-acid polypeptide reads, in one-letter code: Tetrahydromethanopterin S-methyltransferase subunit A (249 aa).

Residues 2 to 225 (PEKAEPAEGW…YMAGYLSGRT (224 aa)) lie on the Cytoplasmic side of the membrane. 5-hydroxybenzimidazolylcob(I)amide is bound at residue His-88. Residues 226-246 (MGLLIGIISGMIFLFLPMVVL) form a helical membrane-spanning segment. The Extracellular segment spans residues 247–249 (GGV).

The protein belongs to the MtrA family. As to quaternary structure, the complex is composed of 8 subunits; MtrA, MtrB, MtrC, MtrD, MtrE, MtrF, MtrG and MtrH. Requires 5-hydroxybenzimidazolylcob(I)amide as cofactor.

It is found in the cell membrane. It carries out the reaction 5-methyl-5,6,7,8-tetrahydromethanopterin + coenzyme M + 2 Na(+)(in) = 5,6,7,8-tetrahydromethanopterin + methyl-coenzyme M + 2 Na(+)(out). It functions in the pathway one-carbon metabolism; methanogenesis from CO(2); methyl-coenzyme M from 5,10-methylene-5,6,7,8-tetrahydromethanopterin: step 2/2. In terms of biological role, part of a complex that catalyzes the formation of methyl-coenzyme M and tetrahydromethanopterin from coenzyme M and methyl-tetrahydromethanopterin. This is an energy-conserving, sodium-ion translocating step. The polypeptide is Tetrahydromethanopterin S-methyltransferase subunit A (Methanopyrus kandleri (strain AV19 / DSM 6324 / JCM 9639 / NBRC 100938)).